The sequence spans 765 residues: MLADLGLIGTIGEDDEVPVEPESDSGDEEEEGPIVLGRRQKALGKNRSADFNPDFVFTEKEGTYDGSWALADVMSQLKKKRAATTLDEKIEKVRKKRKTEDKEAKSGKLEKEKEAKEGSEPKEQEDLQENDEEGSEDEASETDYSSADENILTKADTLKVKDRKKKKKKGQEAGGFFEDASQYDENLSFQDMNLSRPLLKAITAMGFKQPTPIQKACIPVGLLGKDICACAATGTGKTAAFALPVLERLIYKPRQAPVTRVLVLVPTRELGIQVHSVTRQLAQFCNITTCLAVGGLDVKSQEAALRAAPDILIATPGRLIDHLHNCPSFHLSSIEVLILDEADRMLDEYFEEQMKEIIRMCSHHRQTMLFSATMTDEVKDLASVSLKNPVRIFVNSNTDVAPFLRQEFIRIRPNREGDREAIVAALLTRTFTDHVMLFTQTKKQAHRMHILLGLMGLQVGELHGNLSQTQRLEALRRFKDEQIDILVATDVAARGLDIEGVKTVINFTMPNTIKHYVHRVGRTARAGRAGRSVSLVGEDERKMLKEIVKAAKAPVKARILPQDVILKFRDKIEKMEKDVYAVLQLEAEEKEMQQSEAQINTAKRLLEKGKEAVVQEPERSWFQTKEERKKEKIAKALQEFDLALRGKKKRKKFMKDAKKKGEMTAEERSQFEILKAQMFAERLAKRNRRAKRARAMPEEEPVRGPAKKQKQGKKSVFDEELTNTSKKALKQYRAGPSFEERKQLGLPHQRRGGNFKSKSRYKRRK.

Phosphoserine occurs at positions 23, 25, and 48. Acidic residues predominate over residues 43 to 63 (LGKNRSADFNPDFVFTEKEGT). 2 disordered regions span residues 43–83 (LGKN…KRAA) and 111–179 (KEKE…FFED). Residues 55-57 (FVF) carry the Required for interaction with the PEBOW complex motif. Over residues 129-156 (ENDEEGSEDEASETDYSSADENILTKAD) the composition is skewed to basic and acidic residues. 2 positions are modified to phosphoserine: S135 and S146. A compositionally biased stretch (acidic residues) spans 157–172 (TLKVKDRKKKKKKGQE). The short motif at 164–169 (KKKKKK) is the Nuclear localization signal element. Residues 187–215 (LSFQDMNLSRPLLKAITAMGFKQPTPIQK) carry the Q motif motif. The 175-residue stretch at 218 to 392 (IPVGLLGKDI…SVSLKNPVRI (175 aa)) folds into the Helicase ATP-binding domain. 231–238 (AATGTGKT) is an ATP binding site. The DEAD box motif lies at 340-343 (DEAD). A Helicase C-terminal domain is found at 426-572 (LLTRTFTDHV…DVILKFRDKI (147 aa)). Residues 716-725 (VFDEELTNTS) show a composition bias toward basic residues.

The protein belongs to the DEAD box helicase family. DDX27/DRS1 subfamily. Associates with PeBoW complex, composed of BOP1, PES1 and WDR12. Interacts directly with BOP1 and PES1.

It localises to the nucleus. The protein localises to the nucleolus. The protein resides in the chromosome. It carries out the reaction ATP + H2O = ADP + phosphate + H(+). In terms of biological role, probable ATP-dependent RNA helicase. Component of the nucleolar ribosomal RNA (rRNA) processing machinery that regulates 3' end formation of ribosomal 47S rRNA. The polypeptide is Probable ATP-dependent RNA helicase DDX27 (DDX27) (Homo sapiens (Human)).